A 565-amino-acid chain; its full sequence is Oxygen-dependent choline dehydrogenase (565 aa).

Residue 6-35 (DYIIIGAGSAGNVLATRLTEDADVSVLLLE) participates in FAD binding. Histidine 475 functions as the Proton acceptor in the catalytic mechanism. Residues 541-565 (RSNAPYFVAGERPVRGQPQRAVSAA) are disordered.

The protein belongs to the GMC oxidoreductase family. FAD serves as cofactor.

The catalysed reaction is choline + A = betaine aldehyde + AH2. It catalyses the reaction betaine aldehyde + NAD(+) + H2O = glycine betaine + NADH + 2 H(+). The protein operates within amine and polyamine biosynthesis; betaine biosynthesis via choline pathway; betaine aldehyde from choline (cytochrome c reductase route): step 1/1. Functionally, involved in the biosynthesis of the osmoprotectant glycine betaine. Catalyzes the oxidation of choline to betaine aldehyde and betaine aldehyde to glycine betaine at the same rate. This Ectopseudomonas mendocina (strain ymp) (Pseudomonas mendocina) protein is Oxygen-dependent choline dehydrogenase.